A 129-amino-acid polypeptide reads, in one-letter code: MDPQTALSRALLLLLFLHLSLLGCRSHPVGGPGPVSELPGLQELLDRLRDRVSELQAEQLRVEPLQQGQGLEETWDSPAAAPAGFLGPHHSILRALRGPKMMRDSGCFGRRLDRIGSLSGLGCNVLRRY.

The signal sequence occupies residues 1-26 (MDPQTALSRALLLLLFLHLSLLGCRS). Cys107 and Cys123 are disulfide-bonded.

Belongs to the natriuretic peptide family. In terms of processing, the precursor molecule is proteolytically cleaved, possibly by FURIN or CORIN, to produce the active peptide. May undergo further proteolytic cleavage by various proteases such as DPP4, MME and possibly FAP, to give rise to a variety of shorter peptides. May be cleaved at Pro-99 by the prolyl endopeptidase FAP (seprase) activity (in vitro). May be degraded by IDE. During IDE degradation, the resulting products initially increase the activation of NPR1 and can also stimulate NPR2 to produce cGMP before the fragments are completely degraded and inactivated by IDE (in vitro).

The protein localises to the secreted. Functionally, cardiac hormone that plays a key role in mediating cardio-renal homeostasis. May also function as a paracrine antifibrotic factor in the heart. Acts by specifically binding and stimulating NPR1 to produce cGMP, which in turn activates effector proteins that drive various biological responses. Involved in regulating the extracellular fluid volume and maintaining the fluid-electrolyte balance through natriuresis, diuresis, vasorelaxation, and inhibition of renin and aldosterone secretion. Binds the clearance receptor NPR3. The sequence is that of Natriuretic peptides B (NPPB) from Bos taurus (Bovine).